Consider the following 628-residue polypeptide: DNA ligase (628 aa).

NAD(+)-binding positions include 36–40, 85–86, and glutamate 117; these read DVEYD and SL. Lysine 119 serves as the catalytic N6-AMP-lysine intermediate. NAD(+) contacts are provided by arginine 140, glutamate 174, lysine 309, and lysine 333. Zn(2+) is bound by residues cysteine 427, cysteine 430, cysteine 446, and cysteine 452.

The protein belongs to the NAD-dependent DNA ligase family. LigA subfamily. It depends on Mg(2+) as a cofactor. Mn(2+) serves as cofactor.

It catalyses the reaction NAD(+) + (deoxyribonucleotide)n-3'-hydroxyl + 5'-phospho-(deoxyribonucleotide)m = (deoxyribonucleotide)n+m + AMP + beta-nicotinamide D-nucleotide.. Functionally, DNA ligase that catalyzes the formation of phosphodiester linkages between 5'-phosphoryl and 3'-hydroxyl groups in double-stranded DNA using NAD as a coenzyme and as the energy source for the reaction. It is essential for DNA replication and repair of damaged DNA. This chain is DNA ligase, found in Tropheryma whipplei (strain TW08/27) (Whipple's bacillus).